Here is a 519-residue protein sequence, read N- to C-terminus: Demethylepipodophyllotoxin synthase (519 aa).

Residues 6-26 (CLETLLLGFFVLLPCFFYFVW) traverse the membrane as a helical segment. Cysteine 458 lines the heme pocket.

The protein belongs to the cytochrome P450 family. It depends on heme as a cofactor. In terms of tissue distribution, rhizome-specific expression.

It localises to the membrane. It carries out the reaction (-)-4'-desmethyl-deoxypodophyllotoxin + reduced [NADPH--hemoprotein reductase] + O2 = 4'-demethylepipodophyllotoxin + oxidized [NADPH--hemoprotein reductase] + H2O + H(+). Its pathway is aromatic compound metabolism; phenylpropanoid biosynthesis. In terms of biological role, cytochrome P450 involved in the biosynthesis of etoposide, a chemotherapeutic compound of the topoisomerase inhibitor family. Catalyzes the hydroxylation of deoxypodophyllotoxin to form epipodophyllotoxin. The chain is Demethylepipodophyllotoxin synthase from Sinopodophyllum hexandrum (Himalayan may apple).